The following is a 174-amino-acid chain: RNA pyrophosphohydrolase (174 aa).

Residues 6 to 149 (GYRPNVGIIL…KRDVYLGALK (144 aa)) enclose the Nudix hydrolase domain. The Nudix box motif lies at 38–59 (GGIKPGESPETAMYRELYEEVG).

Belongs to the Nudix hydrolase family. RppH subfamily. Requires a divalent metal cation as cofactor.

In terms of biological role, accelerates the degradation of transcripts by removing pyrophosphate from the 5'-end of triphosphorylated RNA, leading to a more labile monophosphorylated state that can stimulate subsequent ribonuclease cleavage. In Neisseria meningitidis serogroup A / serotype 4A (strain DSM 15465 / Z2491), this protein is RNA pyrophosphohydrolase.